The chain runs to 70 residues: Small ribosomal subunit protein bS21 (70 aa).

Belongs to the bacterial ribosomal protein bS21 family.

The chain is Small ribosomal subunit protein bS21 from Campylobacter hominis (strain ATCC BAA-381 / DSM 21671 / CCUG 45161 / LMG 19568 / NCTC 13146 / CH001A).